The primary structure comprises 640 residues: G protein-coupled receptor kinase 1 (640 aa).

Residues 1–201 (MEIENIVANT…LEKRPVDKHT (201 aa)) form an N-terminal region. In terms of domain architecture, RGS spans 52–187 (YAFVVEKQPI…IQTMYFHRFL (136 aa)). The Protein kinase domain occupies 202–469 (FRLYRVLGKG…AEEIRAHPFF (268 aa)). Residues 208–216 (LGKGGFGEV) and Lys-231 contribute to the ATP site. The active-site Proton acceptor is the Asp-327. One can recognise an AGC-kinase C-terminal domain in the interval 479 to 544 (EPVPWKKMEA…GCVSIPWQSE (66 aa)). The tract at residues 610 to 640 (GVDQQQPSTSAKPAAVRSSRAASASGRTSMI) is disordered. Residues 619–640 (SAKPAAVRSSRAASASGRTSMI) show a composition bias toward low complexity.

This sequence belongs to the protein kinase superfamily. AGC Ser/Thr protein kinase family. GPRK subfamily.

It carries out the reaction [G-protein-coupled receptor] + ATP = [G-protein-coupled receptor]-phosphate + ADP + H(+). Functionally, specifically phosphorylates the activated forms of G protein-coupled receptors. The protein is G protein-coupled receptor kinase 1 (grk-1) of Caenorhabditis briggsae.